Here is a 4490-residue protein sequence, read N- to C-terminus: Dynein axonemal heavy chain 8 (4490 aa).

At serine 674 the chain carries Phosphoserine. AAA stretches follow at residues 1808-2030 (YQNE…VLRT), 2090-2309 (NAVA…KLNL), 2416-2669 (YYPT…IWQG), and 2780-3034 (QFNE…YRRR). ATP is bound by residues 1846-1853 (GPAGTGKT) and 2128-2135 (GPSGSGKT). Residues 3049-3346 (YKNIYAEKVK…MDLLNDADTC (298 aa)) are stalk. Coiled coils occupy residues 3072-3164 (DKLM…ALNT), 3290-3354 (LKAN…QAAS), and 3594-3630 (RRVI…DNLL). AAA stretches follow at residues 3432 to 3662 (LVDP…EVSE) and 3877 to 4091 (ARKY…FIQN).

It belongs to the dynein heavy chain family. In terms of assembly, consists of at least two heavy chains and a number of intermediate and light chains. As to expression, expressed in spermatozoa (at protein level). Not detected in airway epithelial cells (at protein level).

The protein localises to the cytoplasm. The protein resides in the cytoskeleton. It is found in the flagellum axoneme. Force generating protein component of the outer dynein arms (ODAs) in the sperm flagellum. Produces force towards the minus ends of microtubules. Dynein has ATPase activity; the force-producing power stroke is thought to occur on release of ADP. Involved in sperm motility; implicated in sperm flagellar assembly. The sequence is that of Dynein axonemal heavy chain 8 from Homo sapiens (Human).